Reading from the N-terminus, the 1372-residue chain is DNA-directed RNA polymerase subunit beta' (1372 aa).

Residues Cys-69, Cys-71, Cys-84, and Cys-87 each coordinate Zn(2+). 3 residues coordinate Mg(2+): Asp-460, Asp-462, and Asp-464. Cys-808, Cys-882, Cys-889, and Cys-892 together coordinate Zn(2+).

This sequence belongs to the RNA polymerase beta' chain family. As to quaternary structure, the RNAP catalytic core consists of 2 alpha, 1 beta, 1 beta' and 1 omega subunit. When a sigma factor is associated with the core the holoenzyme is formed, which can initiate transcription. The cofactor is Mg(2+). Requires Zn(2+) as cofactor.

The catalysed reaction is RNA(n) + a ribonucleoside 5'-triphosphate = RNA(n+1) + diphosphate. Its function is as follows. DNA-dependent RNA polymerase catalyzes the transcription of DNA into RNA using the four ribonucleoside triphosphates as substrates. The polypeptide is DNA-directed RNA polymerase subunit beta' (Rickettsia akari (strain Hartford)).